A 218-amino-acid chain; its full sequence is YlmG homolog protein 1-2, chloroplastic (218 aa).

The transit peptide at 1–83 directs the protein to the chloroplast; that stretch reads MASFTTNSLA…TRSITTLVLL (83 aa). 2 helical membrane passes run 133 to 153 and 187 to 207; these read LTVV…VLMV and IIPP…AVLG.

The protein belongs to the YggT family.

The protein localises to the plastid. Its subcellular location is the chloroplast thylakoid membrane. In terms of biological role, not required for the biogenesis and accumulation of native cytochrome b6 in the thylakoid membrane. Not functionally involved in the pathway for covalent binding of the c-type heme to cytochrome b6. The chain is YlmG homolog protein 1-2, chloroplastic from Arabidopsis thaliana (Mouse-ear cress).